The chain runs to 814 residues: Acyl-coenzyme A dehydrogenase (814 aa).

E497 functions as the Proton acceptor in the catalytic mechanism.

It belongs to the acyl-CoA dehydrogenase family. It depends on FAD as a cofactor.

The catalysed reaction is a medium-chain 2,3-saturated fatty acyl-CoA + oxidized [electron-transfer flavoprotein] + H(+) = a medium-chain (2E)-enoyl-CoA + reduced [electron-transfer flavoprotein]. It catalyses the reaction a long-chain 2,3-saturated fatty acyl-CoA + oxidized [electron-transfer flavoprotein] + H(+) = a long-chain (2E)-enoyl-CoA + reduced [electron-transfer flavoprotein]. The protein operates within lipid metabolism; fatty acid beta-oxidation. Catalyzes the dehydrogenation of acyl-coenzymes A (acyl-CoAs) to 2-enoyl-CoAs, the first step of the beta-oxidation cycle of fatty acid degradation. Is required for S.typhimurium to utilize medium- and long-chain fatty acids as sole carbon sources for growth. Is needed for bacterial survival during carbone-source starvation. This chain is Acyl-coenzyme A dehydrogenase (fadE), found in Salmonella typhimurium (strain LT2 / SGSC1412 / ATCC 700720).